The sequence spans 551 residues: MKANHIRILLLVTIAIMFISLMGKWEQTFPADNTKQQTSATQNNSHYDNADSSTNTDVTTTDAKSSLAKETNFSKYDNAKSITINTGVFKDVKVSLLDGAIISASLKDYSISLDDKTPMSLLTDKSGSEYIAKSTIVVNKQPISVNFEDQGIKIENGKQILTLTGSADGLQITRTYTFDDTKYNISVSQNIKNTTSAPVNVIVDDSFARDFDPAGDSFSLLNAHSYTFTGVAYSTAKDSFRKESFKDISKTNGQPTVINSDGQGWVAFLQHYFVSAWIPQSTNAKIYYKNLNGDVFEAGAFTGATIAPNQSENISSILYTGPIIKANLVDLAPNLEKTLDYGMLSFFSEIIFWVMNHIHSLVGNWGLAIILVTCLIKLIFYPLSAKSYRSMAKMRMLQPRIKRLQETYKDDRQALGKKMMELYKEEKVNPLSGCLPMLIQIPIFISLYWVLLESVELRQAPFIFWIHDLSMKDPYFVLPVLMGLSMFLQQKLSPAPADPMQAKVMMFLPVIFTFLFASFPSGLVLYWLTNNLISISQQWIITRHYQATHKK.

Residues 3-23 traverse the membrane as a helical segment; it reads ANHIRILLLVTIAIMFISLMG. The span at 33 to 47 shows a compositional bias: polar residues; that stretch reads NTKQQTSATQNNSHY. Residues 33–59 form a disordered region; the sequence is NTKQQTSATQNNSHYDNADSSTNTDVT. Residues 50-59 are compositionally biased toward low complexity; that stretch reads ADSSTNTDVT. The next 3 membrane-spanning stretches (helical) occupy residues 361–381, 431–451, and 504–524; these read LVGN…LIFY, LSGC…YWVL, and VMMF…SGLV.

It belongs to the OXA1/ALB3/YidC family. Type 1 subfamily. Interacts with the Sec translocase complex via SecD. Specifically interacts with transmembrane segments of nascent integral membrane proteins during membrane integration.

The protein localises to the cell inner membrane. Functionally, required for the insertion and/or proper folding and/or complex formation of integral membrane proteins into the membrane. Involved in integration of membrane proteins that insert both dependently and independently of the Sec translocase complex, as well as at least some lipoproteins. Aids folding of multispanning membrane proteins. This chain is Membrane protein insertase YidC, found in Francisella tularensis subsp. tularensis (strain SCHU S4 / Schu 4).